The sequence spans 116 residues: Small ribosomal subunit protein bS6 (116 aa).

The interval 94–116 is disordered; that stretch reads ESITEPSPLTKPKEDRKGDSEAA. Residues 104-116 are compositionally biased toward basic and acidic residues; that stretch reads KPKEDRKGDSEAA.

Belongs to the bacterial ribosomal protein bS6 family.

Functionally, binds together with bS18 to 16S ribosomal RNA. The sequence is that of Small ribosomal subunit protein bS6 from Idiomarina loihiensis (strain ATCC BAA-735 / DSM 15497 / L2-TR).